The following is a 434-amino-acid chain: Methylenetetrahydrofolate--tRNA-(uracil-5-)-methyltransferase TrmFO (434 aa).

An FAD-binding site is contributed by 9 to 14 (GAGLAG).

Belongs to the MnmG family. TrmFO subfamily. FAD serves as cofactor.

The protein resides in the cytoplasm. The enzyme catalyses uridine(54) in tRNA + (6R)-5,10-methylene-5,6,7,8-tetrahydrofolate + NADH + H(+) = 5-methyluridine(54) in tRNA + (6S)-5,6,7,8-tetrahydrofolate + NAD(+). The catalysed reaction is uridine(54) in tRNA + (6R)-5,10-methylene-5,6,7,8-tetrahydrofolate + NADPH + H(+) = 5-methyluridine(54) in tRNA + (6S)-5,6,7,8-tetrahydrofolate + NADP(+). In terms of biological role, catalyzes the folate-dependent formation of 5-methyl-uridine at position 54 (M-5-U54) in all tRNAs. This Bacillus licheniformis (strain ATCC 14580 / DSM 13 / JCM 2505 / CCUG 7422 / NBRC 12200 / NCIMB 9375 / NCTC 10341 / NRRL NRS-1264 / Gibson 46) protein is Methylenetetrahydrofolate--tRNA-(uracil-5-)-methyltransferase TrmFO.